The sequence spans 491 residues: Myocilin (491 aa).

Residues 1-18 form the signal peptide; sequence MPAVQLLLLACPVWDVGA. Residue N43 is glycosylated (N-linked (GlcNAc...) asparagine). A coiled-coil region spans residues 98 to 171; it reads QETPEGLQRE…QEVARLRRGQ (74 aa). Residues 151–189 form a disordered region; the sequence is ENLARRLESSSQEVARLRRGQCPQTRDTARDVPPGSREV. An Olfactomedin-like domain is found at 231–490; it reads GCGELVWVGE…MVTYDIKLSK (260 aa). C232 and C420 form a disulfide bridge. 5 residues coordinate Ca(2+): D367, N415, A416, I464, and D465.

In terms of assembly, homodimer (via N-terminus). Can also form higher oligomers. Interacts with OLFM3, FN1, NRCAM, GLDN and NFASC. Interacts (via N-terminus) with MYL2. Interacts with SFRP1, FRZB, FZD7, FZD10, FZD1 and WIF1; regulates Wnt signaling. Interacts with SNTA1; regulates muscle hypertrophy. Interacts with ERBB2 and ERBB3; activates ERBB2-ERBB3 signaling pathway. Interacts with SNCG; affects its secretion and its aggregation. Palmitoylated. In terms of processing, undergoes a calcium-dependent proteolytic cleavage at Arg-213 by CAPN2 in the endoplasmic reticulum. The result is the production of two fragments, one of 35 kDa containing the C-terminal olfactomedin-like domain, and another of 20 kDa containing the N-terminal leucine zipper-like domain. Post-translationally, glycosylated.

The protein localises to the secreted. The protein resides in the golgi apparatus. It is found in the cytoplasmic vesicle. Its subcellular location is the extracellular space. It localises to the extracellular matrix. The protein localises to the extracellular exosome. The protein resides in the mitochondrion. It is found in the mitochondrion intermembrane space. Its subcellular location is the mitochondrion inner membrane. It localises to the mitochondrion outer membrane. The protein localises to the rough endoplasmic reticulum. The protein resides in the cell projection. It is found in the cilium. Its subcellular location is the endoplasmic reticulum. In terms of biological role, secreted glycoprotein regulating the activation of different signaling pathways in adjacent cells to control different processes including cell adhesion, cell-matrix adhesion, cytoskeleton organization and cell migration. Promotes substrate adhesion, spreading and formation of focal contacts. Negatively regulates cell-matrix adhesion and stress fiber assembly through Rho protein signal transduction. Modulates the organization of actin cytoskeleton by stimulating the formation of stress fibers through interactions with components of Wnt signaling pathways. Promotes cell migration through activation of PTK2 and the downstream phosphatidylinositol 3-kinase signaling. Plays a role in bone formation and promotes osteoblast differentiation in a dose-dependent manner through mitogen-activated protein kinase signaling. Mediates myelination in the peripheral nervous system through ERBB2/ERBB3 signaling. Plays a role as a regulator of muscle hypertrophy through the components of dystrophin-associated protein complex. Involved in positive regulation of mitochondrial depolarization. Plays a role in neurite outgrowth. May participate in the obstruction of fluid outflow in the trabecular meshwork. This Macaca fascicularis (Crab-eating macaque) protein is Myocilin (MYOC).